Here is a 136-residue protein sequence, read N- to C-terminus: MEKIEKIIEFEIARINSHLPRARRSLKELLEMKEAKVTLRDGSEHYFKREELKLLANLLDEDEISKLKLPIVIEISTLERDKIMIRGRVEVKVIKKVLGLEEGYLEENVLKLPRYYLAEIRRKLPTTTVHAFIVEW.

The protein belongs to the UPF0216 family.

The protein is UPF0216 protein PH0358 of Pyrococcus horikoshii (strain ATCC 700860 / DSM 12428 / JCM 9974 / NBRC 100139 / OT-3).